Here is a 118-residue protein sequence, read N- to C-terminus: Large ribosomal subunit protein bL19 (118 aa).

It belongs to the bacterial ribosomal protein bL19 family.

Functionally, this protein is located at the 30S-50S ribosomal subunit interface and may play a role in the structure and function of the aminoacyl-tRNA binding site. This is Large ribosomal subunit protein bL19 from Salinispora tropica (strain ATCC BAA-916 / DSM 44818 / JCM 13857 / NBRC 105044 / CNB-440).